Reading from the N-terminus, the 234-residue chain is Probable pectate lyase F (234 aa).

A signal peptide spans 1 to 17 (MRSTAAVLSILLPGALA). N-linked (GlcNAc...) asparagine glycosylation is present at asparagine 168.

Belongs to the polysaccharide lyase 3 family. The cofactor is Ca(2+).

The protein localises to the secreted. The enzyme catalyses Eliminative cleavage of (1-&gt;4)-alpha-D-galacturonan to give oligosaccharides with 4-deoxy-alpha-D-galact-4-enuronosyl groups at their non-reducing ends.. Functionally, pectinolytic enzyme consist of four classes of enzymes: pectin lyase, polygalacturonase, pectin methylesterase and rhamnogalacturonase. Among pectinolytic enzymes, pectin lyase is the most important in depolymerization of pectin, since it cleaves internal glycosidic bonds of highly methylated pectins. Favors pectate, the anion, over pectin, the methyl ester. In Aspergillus terreus (strain NIH 2624 / FGSC A1156), this protein is Probable pectate lyase F (plyF).